We begin with the raw amino-acid sequence, 546 residues long: Probable malate:quinone oxidoreductase (546 aa).

This sequence belongs to the MQO family. The cofactor is FAD.

The catalysed reaction is (S)-malate + a quinone = a quinol + oxaloacetate. Its pathway is carbohydrate metabolism; tricarboxylic acid cycle; oxaloacetate from (S)-malate (quinone route): step 1/1. This Acinetobacter baumannii (strain ACICU) protein is Probable malate:quinone oxidoreductase.